Here is a 195-residue protein sequence, read N- to C-terminus: Protein GrpE (195 aa).

Basic and acidic residues predominate over residues 1–20 (MSSKEQKTPDEQVLDQKEAA). Positions 1-40 (MSSKEQKTPDEQVLDQKEAAKGQQADAAPETADVADPRDA) are disordered.

Belongs to the GrpE family. Homodimer.

It is found in the cytoplasm. Its function is as follows. Participates actively in the response to hyperosmotic and heat shock by preventing the aggregation of stress-denatured proteins, in association with DnaK and GrpE. It is the nucleotide exchange factor for DnaK and may function as a thermosensor. Unfolded proteins bind initially to DnaJ; upon interaction with the DnaJ-bound protein, DnaK hydrolyzes its bound ATP, resulting in the formation of a stable complex. GrpE releases ADP from DnaK; ATP binding to DnaK triggers the release of the substrate protein, thus completing the reaction cycle. Several rounds of ATP-dependent interactions between DnaJ, DnaK and GrpE are required for fully efficient folding. The sequence is that of Protein GrpE from Pectobacterium carotovorum subsp. carotovorum (strain PC1).